The following is a 149-amino-acid chain: Cytochrome c-555 (149 aa).

An N-terminal signal peptide occupies residues 1 to 20 (MKRTMIVVTTLLLGAGAVMA). Positions 32, 137, 140, and 141 each coordinate heme c.

In terms of assembly, monomer. Post-translationally, binds 1 heme c group covalently per subunit.

The protein resides in the periplasm. Functionally, low-spin monoheme cytochrome. This is Cytochrome c-555 (cycC) from Bradyrhizobium diazoefficiens (strain JCM 10833 / BCRC 13528 / IAM 13628 / NBRC 14792 / USDA 110).